A 231-amino-acid polypeptide reads, in one-letter code: Probable caffeoyl-CoA O-methyltransferase 2 (231 aa).

S-adenosyl-L-methionine-binding positions include Thr-53, Asp-75, 77 to 78 (GV), Ser-83, Asp-101, Ala-130, Asp-152, Asp-154, and Tyr-161. Asp-152 contacts a divalent metal cation. A divalent metal cation contacts are provided by Asp-178 and Asn-179.

This sequence belongs to the class I-like SAM-binding methyltransferase superfamily. Cation-dependent O-methyltransferase family. CCoAMT subfamily.

The catalysed reaction is (E)-caffeoyl-CoA + S-adenosyl-L-methionine = (E)-feruloyl-CoA + S-adenosyl-L-homocysteine + H(+). The sequence is that of Probable caffeoyl-CoA O-methyltransferase 2 (omt6) from Dictyostelium discoideum (Social amoeba).